The sequence spans 213 residues: MNLLIMGLPGAGKGTQAAKIVEKFNVAHISTGDMFRAAMANQTEMGILAKSYIDKGDLVPDEVTNGIVKERLVQDDIKEKGFLLDGYPRTIEQAHALDENLADLGIELQGVINIEIDPSKLVERLSGRIIHKETGETFHKVFNPPVGDYKEEDFYQREDDKPESVKRRLEVNIAQGQPIIDHYRAKGLVHDIEGDQDIDLVFQAIDTVLSKLQ.

10-15 contacts ATP; it reads GAGKGT. The interval 30–59 is NMP; that stretch reads STGDMFRAAMANQTEMGILAKSYIDKGDLV. AMP-binding positions include Thr-31, Arg-36, 57–59, 86–89, and Gln-93; these read DLV and GYPR. The interval 127 to 160 is LID; the sequence is GRIIHKETGETFHKVFNPPVGDYKEEDFYQREDD. Residues Arg-128 and 137-138 contribute to the ATP site; that span reads TF. Residues Arg-157 and Arg-168 each coordinate AMP. Gln-196 contacts ATP.

Belongs to the adenylate kinase family. Monomer.

The protein localises to the cytoplasm. It carries out the reaction AMP + ATP = 2 ADP. It functions in the pathway purine metabolism; AMP biosynthesis via salvage pathway; AMP from ADP: step 1/1. Catalyzes the reversible transfer of the terminal phosphate group between ATP and AMP. Plays an important role in cellular energy homeostasis and in adenine nucleotide metabolism. The chain is Adenylate kinase from Streptococcus suis (strain 98HAH33).